The following is a 289-amino-acid chain: Fatty acid elongase 1 (289 aa).

The next 7 helical transmembrane spans lie at 22–42 (VVGYISGIYLAFVFTGPKLFA), 72–92 (AMVLWNLSLSVFSIFGTSTVT), 123–143 (FWIGVFALSKIPELMDTIFLV), 152–172 (FLHWYHHVTVLLFSWHTYCVG), 177–197 (IWVAAMNYSVHSIMYLYFAIA), 208–228 (WAPYITILQILQMVMGCFVTL), and 251–271 (LLMYASYLYLFSEMFVKAHVL). The short motif at 154–158 (HWYHH) is the HxxHH motif element. Residue H157 is the Nucleophile of the active site. N282 carries an N-linked (GlcNAc...) asparagine glycan.

This sequence belongs to the ELO family.

It localises to the endoplasmic reticulum membrane. The catalysed reaction is an acyl-CoA + malonyl-CoA + H(+) = a 3-oxoacyl-CoA + CO2 + CoA. It participates in lipid metabolism; fatty acid biosynthesis. Its function is as follows. Involved in the synthesis of fatty acids. Elongates C4 fatty acids. Required for the normal mitochondrial function, energy metabolism and growth of epimastigotes. In Trypanosoma cruzi (strain CL Brener), this protein is Fatty acid elongase 1.